Reading from the N-terminus, the 317-residue chain is Ornithine carbamoyltransferase (317 aa).

Residues 57-60 (STRT), glutamine 84, arginine 108, and 135-138 (HPCQ) each bind carbamoyl phosphate. Residues asparagine 166, aspartate 230, and 234–235 (SM) each bind L-ornithine. Carbamoyl phosphate contacts are provided by residues 270 to 271 (CL) and arginine 298.

Belongs to the aspartate/ornithine carbamoyltransferase superfamily. OTCase family. In terms of assembly, homododecamer.

The protein localises to the cytoplasm. It carries out the reaction carbamoyl phosphate + L-ornithine = L-citrulline + phosphate + H(+). The protein operates within amino-acid biosynthesis; L-arginine biosynthesis; L-arginine from L-ornithine and carbamoyl phosphate: step 1/3. Reversibly catalyzes the transfer of the carbamoyl group from carbamoyl phosphate (CP) to the N(epsilon) atom of ornithine (ORN) to produce L-citrulline. This Pyrococcus horikoshii (strain ATCC 700860 / DSM 12428 / JCM 9974 / NBRC 100139 / OT-3) protein is Ornithine carbamoyltransferase.